The following is a 414-amino-acid chain: Isocitrate dehydrogenase [NADP] cytoplasmic (414 aa).

The residue at position 2 (S2) is an N-acetylserine. The residue at position 42 (Y42) is a Phosphotyrosine. Position 75–77 (75–77 (TIT)) interacts with NADP(+). T77 provides a ligand contact to substrate. The residue at position 81 (K81) is an N6-acetyllysine. R82 is a binding site for NADP(+). Residues 94–100 (SPNGTIR) and R109 each bind substrate. K126 is modified (N6-succinyllysine). Residues R132 and K212 each contribute to the substrate site. N6-acetyllysine is present on residues K224, K233, and K243. D252 is a binding site for Mn(2+). K260 is an NADP(+) binding site. Residues D275 and D279 each coordinate Mn(2+). 310 to 315 (GTVTRH) provides a ligand contact to NADP(+). At K321 the chain carries N6-acetyllysine. An NADP(+)-binding site is contributed by N328. The residue at position 389 (S389) is a Phosphoserine. K400 is subject to N6-succinyllysine.

This sequence belongs to the isocitrate and isopropylmalate dehydrogenases family. In terms of assembly, homodimer. Requires Mg(2+) as cofactor. The cofactor is Mn(2+). Acetylation at Lys-374 dramatically reduces catalytic activity.

Its subcellular location is the cytoplasm. It is found in the cytosol. It localises to the peroxisome. The catalysed reaction is D-threo-isocitrate + NADP(+) = 2-oxoglutarate + CO2 + NADPH. Its function is as follows. Catalyzes the NADP(+)-dependent oxidative decarboxylation of isocitrate (D-threo-isocitrate) to 2-ketoglutarate (2-oxoglutarate), which is required by other enzymes such as the phytanoyl-CoA dioxygenase. Plays a critical role in the generation of NADPH, an important cofactor in many biosynthesis pathways. May act as a corneal epithelial crystallin and may be involved in maintaining corneal epithelial transparency. The sequence is that of Isocitrate dehydrogenase [NADP] cytoplasmic (IDH1) from Homo sapiens (Human).